The chain runs to 247 residues: Ribonuclease PH (247 aa).

Residues R87 and 125-127 (GTR) contribute to the phosphate site.

The protein belongs to the RNase PH family. In terms of assembly, homohexameric ring arranged as a trimer of dimers.

The enzyme catalyses tRNA(n+1) + phosphate = tRNA(n) + a ribonucleoside 5'-diphosphate. In terms of biological role, phosphorolytic 3'-5' exoribonuclease that plays an important role in tRNA 3'-end maturation. Removes nucleotide residues following the 3'-CCA terminus of tRNAs; can also add nucleotides to the ends of RNA molecules by using nucleoside diphosphates as substrates, but this may not be physiologically important. Probably plays a role in initiation of 16S rRNA degradation (leading to ribosome degradation) during starvation. This Trichormus variabilis (strain ATCC 29413 / PCC 7937) (Anabaena variabilis) protein is Ribonuclease PH.